A 264-amino-acid chain; its full sequence is MIHSKKLTLGICLVLLIILIGGCIIMTKINSRNAQIKDTFNQTLNVYPTKNLDDFYDKEGFRDQEFDKRDKGTWIINSGMYIQLKGGALKSRAMVLYINRNTRTAKGYFLISETTEDKKGYVHNKDKKYPVKMERNRIIPTKPITDEKLKKEIENFKFFVQYGNFKDFKDYKDGDISYNPNVPSYSAKYQLNNDDYNVQQLRKRYDISTKRAPELKLRGSGDLKGSSVGSKELEFNFVRNKEENVYFSDGINFKPTEEMNHEQN.

The first 22 residues, Met1 to Gly22, serve as a signal peptide directing secretion. Cys23 carries the N-palmitoyl cysteine lipid modification. Residue Cys23 is the site of S-diacylglycerol cysteine attachment.

It belongs to the staphylococcal tandem lipoprotein family.

The protein resides in the cell membrane. This is an uncharacterized protein from Staphylococcus aureus (strain N315).